Reading from the N-terminus, the 41-residue chain is Perlinhibin (41 aa).

In terms of processing, contains four disulfide bonds.

Functionally, binds to calcite crystals in the shell and inhibits further shell growth at the binding site. The sequence is that of Perlinhibin from Haliotis laevigata (Smooth Australian abalone).